Reading from the N-terminus, the 101-residue chain is uncharacterized protein (101 aa).

The segment covering 1 to 11 (MSDEGYRELVE) has biased composition (basic and acidic residues). A disordered region spans residues 1–26 (MSDEGYRELVESKSAPTTPGPWSPDR).

This is an uncharacterized protein from Torque teno canis virus (isolate Cf-TTV10).